Consider the following 416-residue polypeptide: Ribulose bisphosphate carboxylase large chain (416 aa).

2 residues coordinate substrate: Asn-102 and Thr-152. The active-site Proton acceptor is Lys-154. Lys-156 is a substrate binding site. Mg(2+) contacts are provided by Lys-180, Asp-182, and Glu-183. Position 180 is an N6-carboxylysine (Lys-180). The active-site Proton acceptor is His-273. Residues Arg-274, His-306, and Ser-358 each contribute to the substrate site.

The protein belongs to the RuBisCO large chain family. Type I subfamily. As to quaternary structure, heterohexadecamer of 8 large chains and 8 small chains; disulfide-linked. The disulfide link is formed within the large subunit homodimers. The cofactor is Mg(2+). In terms of processing, the disulfide bond which can form in the large chain dimeric partners within the hexadecamer appears to be associated with oxidative stress and protein turnover.

The protein localises to the plastid. The protein resides in the chloroplast. It carries out the reaction 2 (2R)-3-phosphoglycerate + 2 H(+) = D-ribulose 1,5-bisphosphate + CO2 + H2O. The catalysed reaction is D-ribulose 1,5-bisphosphate + O2 = 2-phosphoglycolate + (2R)-3-phosphoglycerate + 2 H(+). Functionally, ruBisCO catalyzes two reactions: the carboxylation of D-ribulose 1,5-bisphosphate, the primary event in carbon dioxide fixation, as well as the oxidative fragmentation of the pentose substrate in the photorespiration process. Both reactions occur simultaneously and in competition at the same active site. The chain is Ribulose bisphosphate carboxylase large chain (rbcL) from Arthropteris beckleri (Fern).